The following is a 258-amino-acid chain: Imidazole glycerol phosphate synthase subunit HisF (258 aa).

Active-site residues include Asp12 and Asp131.

It belongs to the HisA/HisF family. In terms of assembly, heterodimer of HisH and HisF.

It localises to the cytoplasm. It carries out the reaction 5-[(5-phospho-1-deoxy-D-ribulos-1-ylimino)methylamino]-1-(5-phospho-beta-D-ribosyl)imidazole-4-carboxamide + L-glutamine = D-erythro-1-(imidazol-4-yl)glycerol 3-phosphate + 5-amino-1-(5-phospho-beta-D-ribosyl)imidazole-4-carboxamide + L-glutamate + H(+). It functions in the pathway amino-acid biosynthesis; L-histidine biosynthesis; L-histidine from 5-phospho-alpha-D-ribose 1-diphosphate: step 5/9. In terms of biological role, IGPS catalyzes the conversion of PRFAR and glutamine to IGP, AICAR and glutamate. The HisF subunit catalyzes the cyclization activity that produces IGP and AICAR from PRFAR using the ammonia provided by the HisH subunit. This is Imidazole glycerol phosphate synthase subunit HisF from Sinorhizobium fredii (strain NBRC 101917 / NGR234).